Here is a 515-residue protein sequence, read N- to C-terminus: 2-isopropylmalate synthase (515 aa).

A Pyruvate carboxyltransferase domain is found at 5–267 (VIIFDTTLRD…HTNLKHDEIH (263 aa)). The Mn(2+) site is built by Asp-14, His-202, His-204, and Asn-238. The interval 392 to 515 (KLNYLSVQSG…EIKQKKVETV (124 aa)) is regulatory domain.

This sequence belongs to the alpha-IPM synthase/homocitrate synthase family. LeuA type 1 subfamily. In terms of assembly, homodimer. Requires Mn(2+) as cofactor.

The protein localises to the cytoplasm. It carries out the reaction 3-methyl-2-oxobutanoate + acetyl-CoA + H2O = (2S)-2-isopropylmalate + CoA + H(+). It functions in the pathway amino-acid biosynthesis; L-leucine biosynthesis; L-leucine from 3-methyl-2-oxobutanoate: step 1/4. In terms of biological role, catalyzes the condensation of the acetyl group of acetyl-CoA with 3-methyl-2-oxobutanoate (2-ketoisovalerate) to form 3-carboxy-3-hydroxy-4-methylpentanoate (2-isopropylmalate). The chain is 2-isopropylmalate synthase from Aliivibrio fischeri (strain MJ11) (Vibrio fischeri).